Consider the following 512-residue polypeptide: Neuronal acetylcholine receptor subunit alpha-2 (512 aa).

A signal peptide spans 1–27 (MAPSHPAFQFWIHLYLWCLLLMPAVLA). The Extracellular portion of the chain corresponds to 28-241 (QQGSHTHAED…VTYYFVIRRL (214 aa)). N-linked (GlcNAc...) asparagine glycosylation is found at asparagine 56 and asparagine 106. Cysteine 160 and cysteine 174 are joined by a disulfide. A glycan (N-linked (GlcNAc...) asparagine) is linked at asparagine 212. Cysteine 224 and cysteine 225 are oxidised to a cystine. 3 consecutive transmembrane segments (helical) span residues 242 to 266 (PLFY…VFYL), 274 to 292 (ITLC…LLIT), and 308 to 329 (YLLF…VLNV). The Cytoplasmic segment spans residues 330–485 (HHRSPSTHNM…WKYVAMVVDR (156 aa)). A helical membrane pass occupies residues 486-504 (IFLWLFIIVCFLGTIGLFL).

Belongs to the ligand-gated ion channel (TC 1.A.9) family. Acetylcholine receptor (TC 1.A.9.1) subfamily. Alpha-2/CHRNA2 sub-subfamily. In terms of assembly, neuronal AChR is composed of two different types of subunits: alpha and non-alpha (beta). CHRNA2/alpha-2 subunit can be combined to CHRNB2/beta-2 or CHRNB4/beta-4 to give rise to functional receptors. Both CHRNA2:CHRNB2 and CHRNA2:CHRNB4 nAChR complexes are heteropentamers with two subtypes: LS (low agonist sensitivity) with a (CHRNA2)3:(CHRNB2/4)2 and HS (high agonist sensitivity) with a (CHRNA2)2:(CHRNB2/4)3 stoichiometries; the subtypes differ in their subunit binding interfaces which are involved in ligand binding.

Its subcellular location is the synaptic cell membrane. The protein resides in the cell membrane. The enzyme catalyses Ca(2+)(in) = Ca(2+)(out). The catalysed reaction is K(+)(in) = K(+)(out). It catalyses the reaction Na(+)(in) = Na(+)(out). Its function is as follows. Component of neuronal acetylcholine receptors (nAChRs) that function as pentameric, ligand-gated cation channels with high calcium permeability among other activities. nAChRs are excitatory neurotrasnmitter receptors formed by a collection of nAChR subunits known to mediate synaptic transmission in the nervous system and the neuromuscular junction. Each nAchR subunit confers differential attributes to channel properties, including activation, deactivation and desensitization kinetics, pH sensitivity, cation permeability, and binding to allosteric modulators. CHRNA2 forms heteropentameric neuronal acetylcholine receptors with CHRNB2 and CHRNB4 and plays a role in nicotine dependence. The chain is Neuronal acetylcholine receptor subunit alpha-2 (Chrna2) from Mus musculus (Mouse).